The chain runs to 424 residues: UDP-N-acetylglucosamine 1-carboxyvinyltransferase (424 aa).

Lys22–Asn23 serves as a coordination point for phosphoenolpyruvate. A UDP-N-acetyl-alpha-D-glucosamine-binding site is contributed by Arg98. The active-site Proton donor is the Cys122. Cys122 is modified (2-(S-cysteinyl)pyruvic acid O-phosphothioketal). Residues Arg127–Gln131, Asp312, and Ile334 each bind UDP-N-acetyl-alpha-D-glucosamine.

This sequence belongs to the EPSP synthase family. MurA subfamily.

It is found in the cytoplasm. The enzyme catalyses phosphoenolpyruvate + UDP-N-acetyl-alpha-D-glucosamine = UDP-N-acetyl-3-O-(1-carboxyvinyl)-alpha-D-glucosamine + phosphate. It participates in cell wall biogenesis; peptidoglycan biosynthesis. In terms of biological role, cell wall formation. Adds enolpyruvyl to UDP-N-acetylglucosamine. The sequence is that of UDP-N-acetylglucosamine 1-carboxyvinyltransferase from Xanthomonas campestris pv. campestris (strain 8004).